Here is a 363-residue protein sequence, read N- to C-terminus: Type-2 angiotensin II receptor (363 aa).

At 1–45 (MKDNFSFAATSRNITSSLPFVNLNMSGTNDLIFNCSHKPSDKHLE) the chain is on the extracellular side. 4 N-linked (GlcNAc...) asparagine glycosylation sites follow: Asn-4, Asn-13, Asn-24, and Asn-34. Disulfide bonds link Cys-35–Cys-290 and Cys-117–Cys-195. A helical transmembrane segment spans residues 46–70 (AIPVLYYLIFVIGFAVNIIVVSLFC). The Cytoplasmic segment spans residues 71–80 (CQKGPKKVSS). A helical transmembrane segment spans residues 81–104 (IYIFNLAVADLLLLATLPLWATYY). Angiotensin II contacts are provided by Tyr-103 and Tyr-104. At 105–114 (SYRYDWLFGP) the chain is on the extracellular side. Residues 115–140 (VMCKVFGSFLTLNMFASIFFITCMSV) form a helical membrane-spanning segment. Residues 141–159 (DRYQSVIYPFLSQRRNPWQ) are Cytoplasmic-facing. Residues 160–181 (ASYVVPLVWCMACLSSLPTFYF) traverse the membrane as a helical segment. Angiotensin II-binding residues include Arg-182, Tyr-204, and Lys-215. The Extracellular segment spans residues 182-206 (RDVRTIEYLGVNACVMAFPPEKYAQ). Residues 207-232 (WSAGIALMKNVLGFIIPLIFIATCYF) form a helical membrane-spanning segment. Topologically, residues 233-257 (GIRKHLLKTNSYGKNRITRDQVLKM) are cytoplasmic. Residues 258–281 (AAAVVLAFIICWLPFHVLTFLDAL) form a helical membrane-spanning segment. Residue Asp-279 participates in angiotensin II binding. Over 282–294 (SWMGIINSCEVMA) the chain is Extracellular. Residues 295 to 320 (VIDLALPFAILLGFTNSCVNPFLYCF) form a helical membrane-spanning segment. Asp-297 contacts angiotensin II. The Cytoplasmic segment spans residues 321-363 (VGNRFQQKLRSMFRVPITWLQGKRETMSCRKSSSLREMDTFVS). Positions 324–333 (RFQQKLRSMF) are helix VIII. A Phosphoserine; by PKC modification is found at Ser-354.

Belongs to the G-protein coupled receptor 1 family. As to quaternary structure, interacts with MTUS1.

It localises to the cell membrane. Its function is as follows. Receptor for angiotensin II, a vasoconstricting peptide. Signals primarily via a non-canonical G-protein- and beta-arrestin independent pathways. Cooperates with MTUS1 to inhibit ERK2 activation and cell proliferation. The protein is Type-2 angiotensin II receptor (AGTR2) of Meriones unguiculatus (Mongolian jird).